Consider the following 211-residue polypeptide: Methylthioribulose-1-phosphate dehydratase (211 aa).

Residues His-94 and His-96 each contribute to the Zn(2+) site.

This sequence belongs to the aldolase class II family. MtnB subfamily. It depends on Zn(2+) as a cofactor.

The catalysed reaction is 5-(methylsulfanyl)-D-ribulose 1-phosphate = 5-methylsulfanyl-2,3-dioxopentyl phosphate + H2O. It participates in amino-acid biosynthesis; L-methionine biosynthesis via salvage pathway; L-methionine from S-methyl-5-thio-alpha-D-ribose 1-phosphate: step 2/6. Its function is as follows. Catalyzes the dehydration of methylthioribulose-1-phosphate (MTRu-1-P) into 2,3-diketo-5-methylthiopentyl-1-phosphate (DK-MTP-1-P). The protein is Methylthioribulose-1-phosphate dehydratase of Pseudoalteromonas translucida (strain TAC 125).